Here is a 1376-residue protein sequence, read N- to C-terminus: YLP motif-containing protein 1 (1376 aa).

Disordered stretches follow at residues Met-1–Asp-335 and Ser-511–Arg-1058. Over residues Tyr-14–Ala-27 the composition is skewed to pro residues. Composition is skewed to low complexity over residues Ala-31–Gly-50 and Leu-59–His-80. 5 stretches are compositionally biased toward pro residues: residues His-81 to Met-93, Gln-102 to Pro-114, Pro-148 to Tyr-158, Met-166 to Tyr-176, and Tyr-184 to Ile-204. 2 stretches are compositionally biased toward polar residues: residues Gly-207–Pro-216 and Ser-238–Arg-260. Over residues Thr-261 to Gly-271 the composition is skewed to basic residues. A compositionally biased stretch (basic and acidic residues) spans Asp-277–Ala-286. 4 stretches are compositionally biased toward pro residues: residues Pro-303–Glu-320, Ser-511–Pro-537, Leu-545–Met-594, and Pro-632–Gln-641. Residues Ser-642 to Val-671 are compositionally biased toward polar residues. N6-methyllysine is present on Lys-675. A compositionally biased stretch (basic and acidic residues) spans Arg-698–Gly-714. Pro residues-rich tracts occupy residues Met-738–Lys-753, Thr-773–Ile-796, and Pro-840–Val-870. Lys-886 participates in a covalent cross-link: Glycyl lysine isopeptide (Lys-Gly) (interchain with G-Cter in SUMO2). Basic and acidic residues-rich tracts occupy residues Ile-896–Phe-930, Thr-937–Pro-1004, Gly-1013–Met-1023, and Arg-1039–Arg-1058. Residue Lys-943 forms a Glycyl lysine isopeptide (Lys-Gly) (interchain with G-Cter in SUMO2) linkage. Residues Lys-1326–Asp-1333 are involved in interaction with PPP1CA.

In terms of assembly, interacts with PPP1CA and NCOA5. Forms a complex with ILF2, ILF3, KHDRBS1, RBMX, NCOA5 and PPP1CA. High level expression seen in the brain, adipose tissue, heart and kidney, with a low level expression in muscle, spleen and lung (at protein level).

The protein resides in the nucleus. The protein localises to the nucleus speckle. In terms of biological role, plays a role in the reduction of telomerase activity during differentiation of embryonic stem cells by binding to the core promoter of TERT and controlling its down-regulation. The polypeptide is YLP motif-containing protein 1 (Ylpm1) (Rattus norvegicus (Rat)).